A 140-amino-acid chain; its full sequence is Nucleoside diphosphate kinase (140 aa).

6 residues coordinate ATP: lysine 11, phenylalanine 59, arginine 87, threonine 93, arginine 104, and asparagine 114. The active-site Pros-phosphohistidine intermediate is histidine 117.

The protein belongs to the NDK family. Homotetramer. Mg(2+) serves as cofactor.

It localises to the cytoplasm. The enzyme catalyses a 2'-deoxyribonucleoside 5'-diphosphate + ATP = a 2'-deoxyribonucleoside 5'-triphosphate + ADP. The catalysed reaction is a ribonucleoside 5'-diphosphate + ATP = a ribonucleoside 5'-triphosphate + ADP. In terms of biological role, major role in the synthesis of nucleoside triphosphates other than ATP. The ATP gamma phosphate is transferred to the NDP beta phosphate via a ping-pong mechanism, using a phosphorylated active-site intermediate. This Bartonella tribocorum (strain CIP 105476 / IBS 506) protein is Nucleoside diphosphate kinase.